A 249-amino-acid polypeptide reads, in one-letter code: 5'-nucleotidase SurE (249 aa).

D8, D9, S39, and N91 together coordinate a divalent metal cation.

It belongs to the SurE nucleotidase family. A divalent metal cation is required as a cofactor.

It localises to the cytoplasm. The enzyme catalyses a ribonucleoside 5'-phosphate + H2O = a ribonucleoside + phosphate. In terms of biological role, nucleotidase that shows phosphatase activity on nucleoside 5'-monophosphates. The polypeptide is 5'-nucleotidase SurE (Pseudomonas syringae pv. syringae (strain B728a)).